The following is a 702-amino-acid chain: Neurochondrin (702 aa).

This sequence belongs to the neurochondrin family.

It is found in the cytoplasm. The protein resides in the cytosol. Its subcellular location is the cell projection. It localises to the dendrite. The protein localises to the postsynapse. Functionally, probably involved in signal transduction, in the nervous system. Required for the spatial learning process. May also be involved in neurite outgrowth. This is Neurochondrin (NCDN) from Gallus gallus (Chicken).